Consider the following 541-residue polypeptide: GMP synthase [glutamine-hydrolyzing] (541 aa).

The Glutamine amidotransferase type-1 domain occupies Thr-15 to Asn-209. The Nucleophile role is filled by Cys-91. Catalysis depends on residues His-183 and Glu-185. Residues Trp-210–Arg-416 enclose the GMPS ATP-PPase domain. Ser-238–Thr-244 contributes to the ATP binding site. The XMP site is built by Arg-311, Asp-478, Lys-533, and Glu-539.

In terms of assembly, homodimer. The cofactor is Mg(2+).

It localises to the cytoplasm. It is found in the cytosol. It catalyses the reaction XMP + L-glutamine + ATP + H2O = GMP + L-glutamate + AMP + diphosphate + 2 H(+). It functions in the pathway purine metabolism; GMP biosynthesis; GMP from XMP (L-Gln route): step 1/1. Catalyzes the conversion of xanthine monophosphate (XMP) to GMP in the presence of glutamine and ATP through an adenyl-XMP intermediate. This is GMP synthase [glutamine-hydrolyzing] (gua1) from Aspergillus oryzae (strain ATCC 42149 / RIB 40) (Yellow koji mold).